Here is a 474-residue protein sequence, read N- to C-terminus: tRNA-2-methylthio-N(6)-dimethylallyladenosine synthase (474 aa).

The 118-residue stretch at 3–120 folds into the MTTase N-terminal domain; it reads KKLHIKTWGC…LPEMINSVRG (118 aa). [4Fe-4S] cluster-binding residues include Cys12, Cys49, Cys83, Cys157, Cys161, and Cys164. The Radical SAM core domain occupies 143 to 375; the sequence is RAEGPTAFVS…QERINQQAMA (233 aa). The TRAM domain occupies 378-441; sequence RRMLGTVQRI…TNSLRGKIVR (64 aa).

Belongs to the methylthiotransferase family. MiaB subfamily. In terms of assembly, monomer. The cofactor is [4Fe-4S] cluster.

Its subcellular location is the cytoplasm. The catalysed reaction is N(6)-dimethylallyladenosine(37) in tRNA + (sulfur carrier)-SH + AH2 + 2 S-adenosyl-L-methionine = 2-methylsulfanyl-N(6)-dimethylallyladenosine(37) in tRNA + (sulfur carrier)-H + 5'-deoxyadenosine + L-methionine + A + S-adenosyl-L-homocysteine + 2 H(+). Its function is as follows. Catalyzes the methylthiolation of N6-(dimethylallyl)adenosine (i(6)A), leading to the formation of 2-methylthio-N6-(dimethylallyl)adenosine (ms(2)i(6)A) at position 37 in tRNAs that read codons beginning with uridine. This chain is tRNA-2-methylthio-N(6)-dimethylallyladenosine synthase, found in Klebsiella pneumoniae subsp. pneumoniae (strain ATCC 700721 / MGH 78578).